We begin with the raw amino-acid sequence, 359 residues long: Small ribosomal subunit protein uS2 (359 aa).

Positions 232-295 are disordered; sequence EPQFKPSEFT…PVGTEPVATT (64 aa). 2 stretches are compositionally biased toward basic and acidic residues: residues 239 to 250 and 257 to 273; these read EFTRRDGDENRN and DNRR…DTHY.

The protein belongs to the universal ribosomal protein uS2 family.

This chain is Small ribosomal subunit protein uS2 (rpsB), found in Spiroplasma citri.